Reading from the N-terminus, the 278-residue chain is Large ribosomal subunit protein uL2 (278 aa).

Composition is skewed to basic residues over residues 210 to 219 (RSRWLGKRPQ) and 252 to 263 (KKSRGIKTRNSK). The interval 210–278 (RSRWLGKRPQ…LIIRHRKGNK (69 aa)) is disordered.

Belongs to the universal ribosomal protein uL2 family. Part of the 50S ribosomal subunit. Forms a bridge to the 30S subunit in the 70S ribosome.

One of the primary rRNA binding proteins. Required for association of the 30S and 50S subunits to form the 70S ribosome, for tRNA binding and peptide bond formation. It has been suggested to have peptidyltransferase activity; this is somewhat controversial. Makes several contacts with the 16S rRNA in the 70S ribosome. In Lactobacillus johnsonii (strain CNCM I-12250 / La1 / NCC 533), this protein is Large ribosomal subunit protein uL2.